The following is a 230-amino-acid chain: MARLSKRLKAISEKVDRTKYYPLQDALNLVRETAIAKFDESIDVAVNLGIDAKKSDQAVRGSVVLPAGTGKTVRVAVFAQGDKAREAAAAGADIVGFEDLAEQIKAGNIEFDVAIASPDAMRVVGQLGQILGPRGLMPNPKVGTVTPDVAGAVKNAKAGQVQYRADKGGIVQCTIGRASFTVDALTQNMMALIDALNKSKPAASKGIYLRKISVSSTMGIGVRVDQTSMR.

It belongs to the universal ribosomal protein uL1 family. Part of the 50S ribosomal subunit.

Functionally, binds directly to 23S rRNA. The L1 stalk is quite mobile in the ribosome, and is involved in E site tRNA release. Protein L1 is also a translational repressor protein, it controls the translation of the L11 operon by binding to its mRNA. The protein is Large ribosomal subunit protein uL1 of Nitrosospira multiformis (strain ATCC 25196 / NCIMB 11849 / C 71).